Consider the following 708-residue polypeptide: Serine/threonine-protein kinase Nek5 (708 aa).

Residues 4–259 form the Protein kinase domain; sequence YDVIKAIGQG…INSILKRPFL (256 aa). Residues 10-18 and lysine 33 each bind ATP; that span reads IGQGAFGKA. The Proton acceptor role is filled by aspartate 128. Disordered regions lie at residues 376 to 403 and 423 to 454; these read SYHP…PSQW and KQLG…FQEL. Residues 440-454 are compositionally biased toward basic and acidic residues; it reads QELRSNGEEPRFQEL.

This sequence belongs to the protein kinase superfamily. NEK Ser/Thr protein kinase family. NIMA subfamily. It depends on Mg(2+) as a cofactor.

The protein localises to the cell projection. It localises to the cilium. Its subcellular location is the flagellum. It catalyses the reaction L-seryl-[protein] + ATP = O-phospho-L-seryl-[protein] + ADP + H(+). It carries out the reaction L-threonyl-[protein] + ATP = O-phospho-L-threonyl-[protein] + ADP + H(+). This chain is Serine/threonine-protein kinase Nek5 (NEK5), found in Homo sapiens (Human).